The chain runs to 478 residues: Glycogen synthase (478 aa).

Lysine 16 provides a ligand contact to ADP-alpha-D-glucose.

Belongs to the glycosyltransferase 1 family. Bacterial/plant glycogen synthase subfamily.

It carries out the reaction [(1-&gt;4)-alpha-D-glucosyl](n) + ADP-alpha-D-glucose = [(1-&gt;4)-alpha-D-glucosyl](n+1) + ADP + H(+). The protein operates within glycan biosynthesis; glycogen biosynthesis. In terms of biological role, synthesizes alpha-1,4-glucan chains using ADP-glucose. This Lachnoclostridium phytofermentans (strain ATCC 700394 / DSM 18823 / ISDg) (Clostridium phytofermentans) protein is Glycogen synthase.